A 505-amino-acid chain; its full sequence is Pleckstrin homology domain-containing family D member 1 (505 aa).

The PH domain occupies 28–136 (KVQLYGVLWK…WLEMLQESGK (109 aa)). Residues 146-391 (EAMIKSLEAQ…KVRNKEKEER (246 aa)) are a coiled coil. Residues 264–284 (DKNQPQPLTNQSEQPPATDGL) are disordered. The span at 267 to 278 (QPQPLTNQSEQP) shows a compositional bias: polar residues. Arg-502 bears the Omega-N-methylarginine mark.

It belongs to the PLEKHD1 family.

This is Pleckstrin homology domain-containing family D member 1 (Plekhd1) from Rattus norvegicus (Rat).